A 347-amino-acid chain; its full sequence is Holliday junction branch migration complex subunit RuvB (347 aa).

Residues 1-186 (MKDENSISFL…FGITARFELY (186 aa)) are large ATPase domain (RuvB-L). ATP is bound by residues Leu25, Arg26, Gly67, Lys70, Thr71, Thr72, 133 to 135 (EDY), Arg176, Tyr186, and Arg223. Thr71 contacts Mg(2+). Positions 187 to 257 (SEIELVEIIK…IVSIGLEMLR (71 aa)) are small ATPAse domain (RuvB-S). The segment at 260-347 (GEGLDEQDRN…GLNENQRVSF (88 aa)) is head domain (RuvB-H). Residues Arg315 and Arg320 each coordinate DNA.

Belongs to the RuvB family. Homohexamer. Forms an RuvA(8)-RuvB(12)-Holliday junction (HJ) complex. HJ DNA is sandwiched between 2 RuvA tetramers; dsDNA enters through RuvA and exits via RuvB. An RuvB hexamer assembles on each DNA strand where it exits the tetramer. Each RuvB hexamer is contacted by two RuvA subunits (via domain III) on 2 adjacent RuvB subunits; this complex drives branch migration. In the full resolvosome a probable DNA-RuvA(4)-RuvB(12)-RuvC(2) complex forms which resolves the HJ.

The protein resides in the cytoplasm. The enzyme catalyses ATP + H2O = ADP + phosphate + H(+). The RuvA-RuvB-RuvC complex processes Holliday junction (HJ) DNA during genetic recombination and DNA repair, while the RuvA-RuvB complex plays an important role in the rescue of blocked DNA replication forks via replication fork reversal (RFR). RuvA specifically binds to HJ cruciform DNA, conferring on it an open structure. The RuvB hexamer acts as an ATP-dependent pump, pulling dsDNA into and through the RuvAB complex. RuvB forms 2 homohexamers on either side of HJ DNA bound by 1 or 2 RuvA tetramers; 4 subunits per hexamer contact DNA at a time. Coordinated motions by a converter formed by DNA-disengaged RuvB subunits stimulates ATP hydrolysis and nucleotide exchange. Immobilization of the converter enables RuvB to convert the ATP-contained energy into a lever motion, pulling 2 nucleotides of DNA out of the RuvA tetramer per ATP hydrolyzed, thus driving DNA branch migration. The RuvB motors rotate together with the DNA substrate, which together with the progressing nucleotide cycle form the mechanistic basis for DNA recombination by continuous HJ branch migration. Branch migration allows RuvC to scan DNA until it finds its consensus sequence, where it cleaves and resolves cruciform DNA. This chain is Holliday junction branch migration complex subunit RuvB, found in Borreliella burgdorferi (strain ATCC 35210 / DSM 4680 / CIP 102532 / B31) (Borrelia burgdorferi).